A 313-amino-acid polypeptide reads, in one-letter code: Ribosomal RNA small subunit methyltransferase H (313 aa).

Residues 35-37, aspartate 55, phenylalanine 79, aspartate 101, and glutamine 108 each bind S-adenosyl-L-methionine; that span reads GGH.

Belongs to the methyltransferase superfamily. RsmH family.

It localises to the cytoplasm. It carries out the reaction cytidine(1402) in 16S rRNA + S-adenosyl-L-methionine = N(4)-methylcytidine(1402) in 16S rRNA + S-adenosyl-L-homocysteine + H(+). Its function is as follows. Specifically methylates the N4 position of cytidine in position 1402 (C1402) of 16S rRNA. This is Ribosomal RNA small subunit methyltransferase H from Erwinia tasmaniensis (strain DSM 17950 / CFBP 7177 / CIP 109463 / NCPPB 4357 / Et1/99).